The primary structure comprises 390 residues: MCNNEAKMSELLSVQSDAPAKKINLMDLTRQQMREFFKELGEKPFRADQLVKWIYHFGEDNFDNMTNINKKLREKLKAVAEIKAPEVAVEQRSADGTIKWAMQVGEQQVETVYIPEADRATLCVSSQVGCALACTFCSTAQQGFNRNLTVSEIIGQVWRASKIIGNFGVTGVRPITNVVMMGMGEPLLNVANVVPAMEIMLDDFAYGLSKRRVTLSTSGVVPALDNLSKMIDVALAISLHAPNDELRDEIVPINKKYNIKTLIDSVNRYLTVSNANHGKVTIEYVMLDHVNDGVEHAHQLADVLKNTPCKINLIPWNPFPEAPYAKSSNTRIDRFQKTLMEYDFTVIIRKTRGDDIDAACGQLAGDVIDRTKRTAMKRQFGQNIGVTEVN.

Glutamate 110 serves as the catalytic Proton acceptor. The Radical SAM core domain maps to 116–355; the sequence is EADRATLCVS…VIIRKTRGDD (240 aa). Cysteine 123 and cysteine 360 are disulfide-bonded. Residues cysteine 130, cysteine 134, and cysteine 137 each coordinate [4Fe-4S] cluster. Residues 184 to 185, serine 216, 238 to 240, and asparagine 317 each bind S-adenosyl-L-methionine; these read GE and SLH. Cysteine 360 serves as the catalytic S-methylcysteine intermediate.

This sequence belongs to the radical SAM superfamily. RlmN family. [4Fe-4S] cluster serves as cofactor.

The protein resides in the cytoplasm. The catalysed reaction is adenosine(2503) in 23S rRNA + 2 reduced [2Fe-2S]-[ferredoxin] + 2 S-adenosyl-L-methionine = 2-methyladenosine(2503) in 23S rRNA + 5'-deoxyadenosine + L-methionine + 2 oxidized [2Fe-2S]-[ferredoxin] + S-adenosyl-L-homocysteine. The enzyme catalyses adenosine(37) in tRNA + 2 reduced [2Fe-2S]-[ferredoxin] + 2 S-adenosyl-L-methionine = 2-methyladenosine(37) in tRNA + 5'-deoxyadenosine + L-methionine + 2 oxidized [2Fe-2S]-[ferredoxin] + S-adenosyl-L-homocysteine. Its function is as follows. Specifically methylates position 2 of adenine 2503 in 23S rRNA and position 2 of adenine 37 in tRNAs. m2A2503 modification seems to play a crucial role in the proofreading step occurring at the peptidyl transferase center and thus would serve to optimize ribosomal fidelity. This Haemophilus influenzae (strain PittEE) protein is Dual-specificity RNA methyltransferase RlmN.